The sequence spans 278 residues: UPF0276 protein Ssed_2857 (278 aa).

Belongs to the UPF0276 family.

The sequence is that of UPF0276 protein Ssed_2857 from Shewanella sediminis (strain HAW-EB3).